The sequence spans 122 residues: Small ribosomal subunit protein uS13 (122 aa).

The segment at 99–122 (RGQRTHTNARTRKGPAKAIAGKKK) is disordered.

The protein belongs to the universal ribosomal protein uS13 family. Part of the 30S ribosomal subunit. Forms a loose heterodimer with protein S19. Forms two bridges to the 50S subunit in the 70S ribosome.

Located at the top of the head of the 30S subunit, it contacts several helices of the 16S rRNA. In the 70S ribosome it contacts the 23S rRNA (bridge B1a) and protein L5 of the 50S subunit (bridge B1b), connecting the 2 subunits; these bridges are implicated in subunit movement. Contacts the tRNAs in the A and P-sites. The protein is Small ribosomal subunit protein uS13 of Parvibaculum lavamentivorans (strain DS-1 / DSM 13023 / NCIMB 13966).